The primary structure comprises 1935 residues: Myosin-7 (1935 aa).

Positions 32–81 (DLKKDVFVPDDKQEFVKAKIVSREGGKVTAETEYGKTVTVKEDQVMQQNP) constitute a Myosin N-terminal SH3-like domain. The region spanning 85–778 (DKIEDMAMLT…LLGLLEEMRD (694 aa)) is the Myosin motor domain. Residue Lys-129 is modified to N6,N6,N6-trimethyllysine. 178–185 (GESGAGKT) is a binding site for ATP. At Thr-378 the chain carries Phosphothreonine. Actin-binding stretches follow at residues 655–677 (LNKLMTNLRSTHPHFVRCIIPNE) and 757–771 (KFGHTKVFFKAGLLG). The 30-residue stretch at 781–810 (LSRIITRIQAQSRGVLARMEYKKLLERRDS) folds into the IQ domain. The stretch at 839-1935 (LLKSAEREKE…DIGTKGLNEE (1097 aa)) forms a coiled coil. A phosphoserine mark is found at Ser-1137 and Ser-1269. Thr-1282 carries the phosphothreonine modification. Phosphotyrosine is present on Tyr-1308. Phosphothreonine is present on Thr-1309. Position 1510 is a phosphoserine (Ser-1510). Residue Thr-1513 is modified to Phosphothreonine. The interval 1907–1935 (EERADIAESQVNKLRAKSRDIGTKGLNEE) is disordered. Positions 1923 to 1935 (KSRDIGTKGLNEE) are enriched in basic and acidic residues.

The protein belongs to the TRAFAC class myosin-kinesin ATPase superfamily. Myosin family. Muscle myosin is a hexameric protein that consists of 2 heavy chain subunits (MHC), 2 alkali light chain subunits (MLC) and 2 regulatory light chain subunits (MLC-2). Interacts with ECPAS. Interacts (via C-terminus) with LRRC39. Both wild type and variant Gln-403 are detected in skeletal muscle (at protein level).

The protein resides in the cytoplasm. Its subcellular location is the myofibril. It is found in the sarcomere. Functionally, myosins are actin-based motor molecules with ATPase activity essential for muscle contraction. Forms regular bipolar thick filaments that, together with actin thin filaments, constitute the fundamental contractile unit of skeletal and cardiac muscle. In Homo sapiens (Human), this protein is Myosin-7 (MYH7).